The sequence spans 90 residues: Guanine nucleotide-binding protein subunit gamma (90 aa).

The S-palmitoyl cysteine moiety is linked to residue Cys-86. Cys-87 is modified (cysteine methyl ester). Cys-87 is lipidated: S-farnesyl cysteine. Positions 88-90 (TIM) are cleaved as a propeptide — removed in mature form.

Belongs to the G protein gamma family. In terms of assembly, g proteins are composed of 3 units, alpha, beta and gamma.

It localises to the membrane. The chain is Guanine nucleotide-binding protein subunit gamma from Kluyveromyces lactis (strain ATCC 8585 / CBS 2359 / DSM 70799 / NBRC 1267 / NRRL Y-1140 / WM37) (Yeast).